The chain runs to 217 residues: Peptide deformylase (217 aa).

Residues Cys91 and His133 each contribute to the Fe cation site. Glu134 is a catalytic residue. His137 serves as a coordination point for Fe cation. Residues 153–217 (VSEDGEEEEE…RRGSAAAKEE (65 aa)) form a disordered region. Acidic residues predominate over residues 155–176 (EDGEEEEEAEVAEVMPEPEAEG). Positions 177 to 192 (AGEPSAEGAGQAAAEA) are enriched in low complexity. Residues 206–217 (GERRGSAAAKEE) show a composition bias toward basic and acidic residues.

It belongs to the polypeptide deformylase family. It depends on Fe(2+) as a cofactor.

The enzyme catalyses N-terminal N-formyl-L-methionyl-[peptide] + H2O = N-terminal L-methionyl-[peptide] + formate. Its function is as follows. Removes the formyl group from the N-terminal Met of newly synthesized proteins. Requires at least a dipeptide for an efficient rate of reaction. N-terminal L-methionine is a prerequisite for activity but the enzyme has broad specificity at other positions. The sequence is that of Peptide deformylase from Symbiobacterium thermophilum (strain DSM 24528 / JCM 14929 / IAM 14863 / T).